The chain runs to 456 residues: Cytochrome P450 monooxygenase avaH (456 aa).

Residues 243 to 263 form a helical membrane-spanning segment; sequence LMSYFVSVFLVNVALFNAVSI. Cysteine 403 is a heme binding site.

The protein belongs to the cytochrome P450 family. Heme is required as a cofactor.

It localises to the membrane. It functions in the pathway secondary metabolite biosynthesis. Functionally, cytochrome P450 monooxygenase; part of the cluster that mediates the biosynthesis of a highly modified cyclo-arginine-tryptophan dipeptide (cRW). The first step of the pathway is perfornmed by the arginine-containing cyclodipeptide synthase (RCPDS) avaA that acts as the scaffold-generating enzyme and is responsible for formation of the cyclo-Arg-Trp (cRW) diketopiperazine. AvaB then acts as a multifunctional flavoenzyme that is responsible for generating the cyclo-Arg-formylkynurenine DKP, which can be deformylated by avaC. AvaB then further catalyzes an additional N-oxidation followed by cyclization and dehydration. The next step is an N-acetylation of the guanidine group catalyzed by the arginine N-acetyltransferase avaD. The roles of the additional enzymes identified within the ava cluster still have to be determined. The chain is Cytochrome P450 monooxygenase avaH from Aspergillus versicolor.